We begin with the raw amino-acid sequence, 602 residues long: RecBCD enzyme subunit RecD (602 aa).

Position 171–178 (Gly171–Thr178) interacts with ATP.

This sequence belongs to the RecD family. Heterotrimer of RecB, RecC and RecD. All subunits contribute to DNA-binding.

The enzyme catalyses Couples ATP hydrolysis with the unwinding of duplex DNA at the replication fork by translocating in the 5'-3' direction. This creates two antiparallel DNA single strands (ssDNA). The leading ssDNA polymer is the template for DNA polymerase III holoenzyme which synthesizes a continuous strand.. It carries out the reaction ATP + H2O = ADP + phosphate + H(+). Its function is as follows. A helicase/nuclease that prepares dsDNA breaks (DSB) for recombinational DNA repair. Binds to DSBs and unwinds DNA via a highly rapid and processive ATP-dependent bidirectional helicase activity. Unwinds dsDNA until it encounters a Chi (crossover hotspot instigator) sequence from the 3' direction. Cuts ssDNA a few nucleotides 3' to the Chi site. The properties and activities of the enzyme are changed at Chi. The Chi-altered holoenzyme produces a long 3'-ssDNA overhang and facilitates RecA-binding to the ssDNA for homologous DNA recombination and repair. Holoenzyme degrades any linearized DNA that is unable to undergo homologous recombination. In the holoenzyme this subunit has ssDNA-dependent ATPase and 5'-3' helicase activity. When added to pre-assembled RecBC greatly stimulates nuclease activity and augments holoenzyme processivity. Negatively regulates the RecA-loading ability of RecBCD. This Buchnera aphidicola subsp. Acyrthosiphon pisum (strain APS) (Acyrthosiphon pisum symbiotic bacterium) protein is RecBCD enzyme subunit RecD.